Here is a 562-residue protein sequence, read N- to C-terminus: Nucleoprotein (562 aa).

Residues 53–238 are binding site for the cap structure m7GTP; the sequence is MRRDKRDESD…ITQEESQINI (186 aa). 2 residues coordinate Mn(2+): aspartate 381 and glutamate 383. Zn(2+) is bound by residues glutamate 391, cysteine 498, histidine 501, and cysteine 522. Aspartate 526 is a Mn(2+) binding site.

The protein belongs to the arenaviridae nucleocapsid protein family. In terms of assembly, homomultimerizes to form the nucleocapsid. Binds to viral genomic RNA. Interacts with glycoprotein G2. Interacts with protein Z; this interaction probably directs the encapsidated genome to budding sites. Interacts with protein L; this interaction does not interfere with Z-L interaction. Interacts with host IKBKE (via Protein kinase domain); the interaction inhibits IKBKE kinase activity.

It is found in the virion. The protein localises to the host cytoplasm. Functionally, encapsidates the genome, protecting it from nucleases. The encapsidated genomic RNA is termed the nucleocapsid (NC). Serves as template for viral transcription and replication. The increased presence of protein N in host cell does not seem to trigger the switch from transcription to replication as observed in other negative strain RNA viruses. Through the interaction with host IKBKE, strongly inhibits the phosphorylation and nuclear translocation of host IRF3, a protein involved in interferon activation pathway, leading to the inhibition of interferon-beta and IRF3-dependent promoters activation. Also encodes a functional 3'-5' exoribonuclease that degrades preferentially dsRNA substrates and thereby participates in the suppression of interferon induction. This chain is Nucleoprotein, found in Bear Canyon mammarenavirus (isolate Mouse/United States/AV A0070039/2000) (BCNV).